We begin with the raw amino-acid sequence, 194 residues long: uncharacterized protein (194 aa).

This is an uncharacterized protein from Acanthamoeba polyphaga (Amoeba).